The primary structure comprises 609 residues: Serine/threonine-protein phosphatase 4 regulatory subunit 2 (609 aa).

Serine 68 carries the post-translational modification Phosphoserine. The disordered stretch occupies residues 175-569 (NNNGNADEGS…EEARVSPSAT (395 aa)). Low complexity predominate over residues 183–194 (GSSPGAGSAGCA). The segment covering 201 to 225 (RSDDNDQPKAKKAKLEIDGEERSEA) has biased composition (basic and acidic residues). A phosphoserine mark is found at serine 223 and serine 226. Positions 233–244 (VATRVKNEKDEK) are enriched in basic and acidic residues. A Phosphoserine modification is found at serine 252. Residues 258 to 270 (EIEEPDEEVDEAD) show a composition bias toward acidic residues. Composition is skewed to basic and acidic residues over residues 310-351 (IEAE…KPDG) and 375-400 (EPVK…KQDD). The segment covering 401–410 (IDSTETDDAP) has biased composition (acidic residues). Residues 414–462 (KPAEEKIASSESKPKTKSEDDPEAETKKSQPEKTETEAAEKSVSDEKQA) are compositionally biased toward basic and acidic residues. A Phosphothreonine modification is found at threonine 602. Residue serine 603 is modified to Phosphoserine.

The protein belongs to the PPP4R2 family. As to quaternary structure, serine/threonine-protein phosphatase 4 (PP4) occurs in different assemblies of the catalytic and one or more regulatory subunits. Probably part of a PP4 PPP4C-PPP4R2-PPP4R3 complex containing Pp4-19C, PPP4R2r and flfl.

Regulatory subunit of serine/threonine-protein phosphatase 4 (PP4). The probable PP4 complex Pp4-19C-PPP4R2r-flfl (PPP4C-PPP4R2-PPP4R3) is required to prevent caspase induced cell death (in vitro). The protein is Serine/threonine-protein phosphatase 4 regulatory subunit 2 (PPP4R2r) of Drosophila melanogaster (Fruit fly).